The following is a 504-amino-acid chain: Cytochrome P450 2S1 (504 aa).

Residue cysteine 440 participates in heme binding.

The protein belongs to the cytochrome P450 family. Requires heme as cofactor. In terms of tissue distribution, expressed at higher levels in extrahepatic tissues including trachea, lung, stomach, small intestine, colon, kidney, breast, placenta and spleen. Expressed in peripheral blood leukocytes. Constitutively expressed in skin (at protein level).

Its subcellular location is the endoplasmic reticulum membrane. The protein localises to the microsome membrane. The enzyme catalyses all-trans-retinoate + reduced [NADPH--hemoprotein reductase] + O2 = all-trans-5,6-epoxyretinoate + oxidized [NADPH--hemoprotein reductase] + H2O + H(+). It catalyses the reaction all-trans-retinoate + reduced [NADPH--hemoprotein reductase] + O2 = all-trans-4-hydroxyretinoate + oxidized [NADPH--hemoprotein reductase] + H2O + H(+). The catalysed reaction is (5S)-hydroperoxy-(6E,8Z,11Z,14Z)-eicosatetraenoate = 5-oxo-(6E,8Z,11Z,14Z)-eicosatetraenoate + H2O. It carries out the reaction (12S)-hydroperoxy-(5Z,8Z,10E,14Z)-eicosatetraenoate = 12-oxo-(5Z,8Z,10E,14Z)-eicosatetraenoate + H2O. The enzyme catalyses (15S)-hydroperoxy-(5Z,8Z,11Z,13E)-eicosatetraenoate = 15-oxo-(5Z,8Z,11Z,13E)-eicosatetraenoate + H2O. It catalyses the reaction prostaglandin H2 = thromboxane A2. The catalysed reaction is prostaglandin H2 = (12S)-hydroxy-(5Z,8E,10E)-heptadecatrienoate + malonaldehyde. It carries out the reaction (13S)-hydroperoxy-(9Z,11E)-octadecadienoate = 13-oxo-(9Z,11E)-octadecadienoate + H2O. It participates in lipid metabolism; fatty acid metabolism. Its function is as follows. A cytochrome P450 monooxygenase involved in the metabolism of retinoids and eicosanoids. In epidermis, may contribute to the oxidative metabolism of all-trans-retinoic acid. For this activity, uses molecular oxygen inserting one oxygen atom into a substrate, and reducing the second into a water molecule, with two electrons provided by NADPH via cytochrome P450 reductase (NADPH--hemoprotein reductase). Additionally, displays peroxidase and isomerase activities toward various oxygenated eicosanoids such as prostaglandin H2 (PGH2) and hydroperoxyeicosatetraenoates (HPETEs). Independently of cytochrome P450 reductase, NADPH, and O2, catalyzes the breakdown of PGH2 to hydroxyheptadecatrienoic acid (HHT) and malondialdehyde (MDA), which is known to act as a mediator of DNA damage. The protein is Cytochrome P450 2S1 of Homo sapiens (Human).